The following is a 334-amino-acid chain: Holliday junction branch migration complex subunit RuvB (334 aa).

The segment at A4–Y184 is large ATPase domain (RuvB-L). ATP contacts are provided by residues R24, G65, K68, T69, T70, E131–Y133, R174, Y184, and R221. Mg(2+) is bound at residue T69. A small ATPAse domain (RuvB-S) region spans residues N185–D255. The tract at residues S258–E334 is head domain (RuvB-H). Residues R294, R313, and R318 each contribute to the DNA site.

Belongs to the RuvB family. Homohexamer. Forms an RuvA(8)-RuvB(12)-Holliday junction (HJ) complex. HJ DNA is sandwiched between 2 RuvA tetramers; dsDNA enters through RuvA and exits via RuvB. An RuvB hexamer assembles on each DNA strand where it exits the tetramer. Each RuvB hexamer is contacted by two RuvA subunits (via domain III) on 2 adjacent RuvB subunits; this complex drives branch migration. In the full resolvosome a probable DNA-RuvA(4)-RuvB(12)-RuvC(2) complex forms which resolves the HJ.

The protein resides in the cytoplasm. The enzyme catalyses ATP + H2O = ADP + phosphate + H(+). Its function is as follows. The RuvA-RuvB-RuvC complex processes Holliday junction (HJ) DNA during genetic recombination and DNA repair, while the RuvA-RuvB complex plays an important role in the rescue of blocked DNA replication forks via replication fork reversal (RFR). RuvA specifically binds to HJ cruciform DNA, conferring on it an open structure. The RuvB hexamer acts as an ATP-dependent pump, pulling dsDNA into and through the RuvAB complex. RuvB forms 2 homohexamers on either side of HJ DNA bound by 1 or 2 RuvA tetramers; 4 subunits per hexamer contact DNA at a time. Coordinated motions by a converter formed by DNA-disengaged RuvB subunits stimulates ATP hydrolysis and nucleotide exchange. Immobilization of the converter enables RuvB to convert the ATP-contained energy into a lever motion, pulling 2 nucleotides of DNA out of the RuvA tetramer per ATP hydrolyzed, thus driving DNA branch migration. The RuvB motors rotate together with the DNA substrate, which together with the progressing nucleotide cycle form the mechanistic basis for DNA recombination by continuous HJ branch migration. Branch migration allows RuvC to scan DNA until it finds its consensus sequence, where it cleaves and resolves cruciform DNA. This chain is Holliday junction branch migration complex subunit RuvB, found in Shewanella baltica (strain OS155 / ATCC BAA-1091).